Consider the following 427-residue polypeptide: 3-phosphoshikimate 1-carboxyvinyltransferase (427 aa).

Lysine 20, serine 21, and arginine 25 together coordinate 3-phosphoshikimate. Position 20 (lysine 20) interacts with phosphoenolpyruvate. Positions 92 and 120 each coordinate phosphoenolpyruvate. Positions 166, 168, 312, and 339 each coordinate 3-phosphoshikimate. Glutamine 168 serves as a coordination point for phosphoenolpyruvate. Aspartate 312 functions as the Proton acceptor in the catalytic mechanism. Phosphoenolpyruvate is bound by residues arginine 343 and arginine 385.

The protein belongs to the EPSP synthase family. As to quaternary structure, monomer.

The protein resides in the cytoplasm. The catalysed reaction is 3-phosphoshikimate + phosphoenolpyruvate = 5-O-(1-carboxyvinyl)-3-phosphoshikimate + phosphate. The protein operates within metabolic intermediate biosynthesis; chorismate biosynthesis; chorismate from D-erythrose 4-phosphate and phosphoenolpyruvate: step 6/7. Functionally, catalyzes the transfer of the enolpyruvyl moiety of phosphoenolpyruvate (PEP) to the 5-hydroxyl of shikimate-3-phosphate (S3P) to produce enolpyruvyl shikimate-3-phosphate and inorganic phosphate. The chain is 3-phosphoshikimate 1-carboxyvinyltransferase from Streptococcus thermophilus (strain ATCC BAA-491 / LMD-9).